The sequence spans 511 residues: Bifunctional purine biosynthesis protein PurH (511 aa).

An MGS-like domain is found at 1-145 (MKKRALVSVS…KNHKFVSVIV (145 aa)).

It belongs to the PurH family.

It carries out the reaction (6R)-10-formyltetrahydrofolate + 5-amino-1-(5-phospho-beta-D-ribosyl)imidazole-4-carboxamide = 5-formamido-1-(5-phospho-D-ribosyl)imidazole-4-carboxamide + (6S)-5,6,7,8-tetrahydrofolate. It catalyses the reaction IMP + H2O = 5-formamido-1-(5-phospho-D-ribosyl)imidazole-4-carboxamide. It functions in the pathway purine metabolism; IMP biosynthesis via de novo pathway; 5-formamido-1-(5-phospho-D-ribosyl)imidazole-4-carboxamide from 5-amino-1-(5-phospho-D-ribosyl)imidazole-4-carboxamide (10-formyl THF route): step 1/1. The protein operates within purine metabolism; IMP biosynthesis via de novo pathway; IMP from 5-formamido-1-(5-phospho-D-ribosyl)imidazole-4-carboxamide: step 1/1. This Bacillus cereus (strain ATCC 14579 / DSM 31 / CCUG 7414 / JCM 2152 / NBRC 15305 / NCIMB 9373 / NCTC 2599 / NRRL B-3711) protein is Bifunctional purine biosynthesis protein PurH.